A 154-amino-acid chain; its full sequence is UPF0178 protein in pahZ1 5'region (154 aa).

It belongs to the UPF0178 family.

The polypeptide is UPF0178 protein in pahZ1 5'region (Paucimonas lemoignei (Pseudomonas lemoignei)).